A 502-amino-acid polypeptide reads, in one-letter code: Probable glycine dehydrogenase (decarboxylating) subunit 2 (502 aa).

Lysine 273 is subject to N6-(pyridoxal phosphate)lysine.

This sequence belongs to the GcvP family. C-terminal subunit subfamily. The glycine cleavage system is composed of four proteins: P, T, L and H. In this organism, the P 'protein' is a heterodimer of two subunits. Requires pyridoxal 5'-phosphate as cofactor.

It catalyses the reaction N(6)-[(R)-lipoyl]-L-lysyl-[glycine-cleavage complex H protein] + glycine + H(+) = N(6)-[(R)-S(8)-aminomethyldihydrolipoyl]-L-lysyl-[glycine-cleavage complex H protein] + CO2. Its function is as follows. The glycine cleavage system catalyzes the degradation of glycine. The P protein binds the alpha-amino group of glycine through its pyridoxal phosphate cofactor; CO(2) is released and the remaining methylamine moiety is then transferred to the lipoamide cofactor of the H protein. The chain is Probable glycine dehydrogenase (decarboxylating) subunit 2 from Staphylococcus epidermidis (strain ATCC 35984 / DSM 28319 / BCRC 17069 / CCUG 31568 / BM 3577 / RP62A).